A 536-amino-acid chain; its full sequence is Phosphoenolpyruvate carboxykinase (ATP) (536 aa).

The substrate site is built by Arg-61, Tyr-195, and Lys-201. ATP is bound by residues Lys-201, His-220, and 236-244 (GLSGTGKTT). 2 residues coordinate Mn(2+): Lys-201 and His-220. Asp-257 contributes to the Mn(2+) binding site. Residues Glu-285, Arg-322, and Thr-447 each contribute to the ATP site. Arg-322 is a substrate binding site.

This sequence belongs to the phosphoenolpyruvate carboxykinase (ATP) family. Mn(2+) is required as a cofactor.

Its subcellular location is the cytoplasm. It carries out the reaction oxaloacetate + ATP = phosphoenolpyruvate + ADP + CO2. It participates in carbohydrate biosynthesis; gluconeogenesis. In terms of biological role, involved in the gluconeogenesis. Catalyzes the conversion of oxaloacetate (OAA) to phosphoenolpyruvate (PEP) through direct phosphoryl transfer between the nucleoside triphosphate and OAA. The sequence is that of Phosphoenolpyruvate carboxykinase (ATP) from Brucella melitensis biotype 1 (strain ATCC 23456 / CCUG 17765 / NCTC 10094 / 16M).